The sequence spans 1252 residues: Calmodulin-regulated spectrin-associated protein 3 (1252 aa).

Disordered stretches follow at residues 183–205, 331–385, 429–457, 479–604, 638–697, 712–935, 962–981, 996–1030, and 1063–1114; these read KTEQ…SPAQ, HAVS…SMSH, SVSS…ESGD, GAAD…MSEL, FLQV…LGDY, QRDM…EAAR, TTRA…GDFT, DLDK…DDSA, and PNNL…TGPR. Position 184 is a phosphothreonine (threonine 184). Serine 193 is subject to Phosphoserine. The Calponin-homology (CH) domain maps to 203–312; that stretch reads PAQPSIRYRK…LVVLLAEMYM (110 aa). Serine 334, serine 347, serine 351, serine 368, serine 373, and serine 382 each carry phosphoserine. Positions 335–353 are enriched in polar residues; that stretch reads PRNTETVPSQNNSGSSSPV. Positions 359 to 373 are enriched in low complexity; it reads PLLSPGGPQSPLRGS. Polar residues-rich tracts occupy residues 374-383, 441-450, and 525-534; these read TGSLKSSPSM, VSTSSRNSAQ, and ENPSKSSPCS. Phosphoserine occurs at positions 548, 555, and 561. Over residues 569 to 580 the composition is skewed to basic and acidic residues; that stretch reads AERKKQLVKAEA. Residues 595-629 are a coiled coil; it reads EALSSEMSELGARLEEKRRAIEAQKRRIEAIFAKH. Serine 683 is modified (phosphoserine). A coiled-coil region spans residues 696-727; it reads DYNRAVSKLSAALSSLQRDMQRLTDQQQRLLA. Residues 729–739 are compositionally biased toward pro residues; sequence PEAPGPAPPPA. The span at 740 to 768 shows a compositional bias: low complexity; the sequence is AWVIPGPATGPKAASPSPARRAPAARRSP. Serine 767 is subject to Phosphoserine. Threonine 797 is modified (phosphothreonine). A phosphoserine mark is found at serine 812 and serine 881. A compositionally biased stretch (polar residues) spans 812 to 825; the sequence is SPSQVPVQTRSSIL. Residues 887 to 934 are compositionally biased toward basic and acidic residues; that stretch reads YKDEDKPEDEMAQKRASLLERQQRRVEEARRRKQWQEAEKEQKREEAA. A coiled-coil region spans residues 896 to 943; the sequence is EMAQKRASLLERQQRRVEEARRRKQWQEAEKEQKREEAARLAQEAPGL. Serine 1077 carries the phosphoserine modification. A CKK domain is found at 1112–1246; sequence GPRLYKEPSA…QSKKPTTPKK (135 aa).

The protein belongs to the CAMSAP1 family. As to quaternary structure, interacts with PLEKHA7. Interacts with CAMSAP2. Interacts with KATNA1 and KATNB1; leading to regulate the length of CAMSAP3-decorated microtubule stretches. Interacts with AKAP9; regulating Golgi assembly in epithelial cells. Interacts with MACF1. Interacts with isoform C of CDH23; leading to inhibit CAMSAP3 ability to induce microtubule bundle formation. Interacts with AKNA. In terms of tissue distribution, expressed at the apical surface of respiratory epithelia, as well as in the acini of submucosal glands (at protein level). In cochlea, restricted to the organ of Corti and increases during development (at protein level). Highly expressed in both sensory hair cells and supporting cells.

It localises to the cytoplasm. The protein resides in the cytoskeleton. Its subcellular location is the cell junction. The protein localises to the adherens junction. It is found in the cilium axoneme. It localises to the cilium basal body. In terms of biological role, key microtubule-organizing protein that specifically binds the minus-end of non-centrosomal microtubules and regulates their dynamics and organization. Specifically recognizes growing microtubule minus-ends and autonomously decorates and stabilizes microtubule lattice formed by microtubule minus-end polymerization. Acts on free microtubule minus-ends that are not capped by microtubule-nucleating proteins or other factors and protects microtubule minus-ends from depolymerization. In addition, it also reduces the velocity of microtubule polymerization. Required for the biogenesis and the maintenance of zonula adherens by anchoring the minus-end of microtubules to zonula adherens and by recruiting the kinesin KIFC3 to those junctional sites. Required for orienting the apical-to-basal polarity of microtubules in epithelial cells: acts by tethering non-centrosomal microtubules to the apical cortex, leading to their longitudinal orientation. Plays a key role in early embryos, which lack centrosomes: accumulates at the microtubule bridges that connect pairs of cells and enables the formation of a non-centrosomal microtubule-organizing center that directs intracellular transport in the early embryo. Couples non-centrosomal microtubules with actin: interaction with MACF1 at the minus ends of non-centrosomal microtubules, tethers the microtubules to actin filaments, regulating focal adhesion size and cell migration. Plays a key role in the generation of non-centrosomal microtubules by accumulating in the pericentrosomal region and cooperating with KATNA1 to release non-centrosomal microtubules from the centrosome. Through the microtubule cytoskeleton, also regulates the organization of cellular organelles including the Golgi and the early endosomes. Through interaction with AKAP9, involved in translocation of Golgi vesicles in epithelial cells, where microtubules are mainly non-centrosomal. Plays an important role in motile cilia function by facilitatating proper orientation of basal bodies and formation of central microtubule pairs in motile cilia. This Mus musculus (Mouse) protein is Calmodulin-regulated spectrin-associated protein 3.